The following is a 397-amino-acid chain: 8-amino-7-oxononanoate synthase (397 aa).

Residue R23 participates in substrate binding. Position 110 to 111 (110 to 111 (GY)) interacts with pyridoxal 5'-phosphate. A substrate-binding site is contributed by H135. Pyridoxal 5'-phosphate contacts are provided by S181, H209, and T237. N6-(pyridoxal phosphate)lysine is present on K240. T354 contributes to the substrate binding site.

The protein belongs to the class-II pyridoxal-phosphate-dependent aminotransferase family. BioF subfamily. In terms of assembly, homodimer. Pyridoxal 5'-phosphate serves as cofactor.

It catalyses the reaction 6-carboxyhexanoyl-[ACP] + L-alanine + H(+) = (8S)-8-amino-7-oxononanoate + holo-[ACP] + CO2. It participates in cofactor biosynthesis; biotin biosynthesis. Functionally, catalyzes the decarboxylative condensation of pimeloyl-[acyl-carrier protein] and L-alanine to produce 8-amino-7-oxononanoate (AON), [acyl-carrier protein], and carbon dioxide. The chain is 8-amino-7-oxononanoate synthase from Anaeromyxobacter dehalogenans (strain 2CP-C).